A 445-amino-acid chain; its full sequence is Acyl-lipid (7-3)-desaturase (445 aa).

Residues 11–91 (VAELRAAEVA…MSKFFVGSLD (81 aa)) form the Cytochrome b5 heme-binding domain. Heme is bound by residues His-50 and His-73. Helical transmembrane passes span 126-146 (YWLK…YMLL) and 148-168 (GKTL…GLNI). Positions 170-174 (HDANH) match the Histidine box-1 motif. The Histidine box-2 motif lies at 205–210 (HVVMHH). 3 consecutive transmembrane segments (helical) span residues 247-267 (ILPG…LELL), 283-303 (LFAP…ALPL), and 312-332 (ALCI…FFFI). Residues 380 to 384 (QIEHH) carry the Histidine box-3 motif.

This sequence belongs to the fatty acid desaturase type 1 family. The cofactor is Fe(2+).

Its subcellular location is the membrane. It carries out the reaction a (7Z,10Z,13Z,16Z,19Z)-docosapentaenoyl-containing glycerolipid + 2 Fe(II)-[cytochrome b5] + O2 + 2 H(+) = a (4Z,7Z,10Z,13Z,16Z,19Z)-docosahexaenoyl-containing glycerolipid + 2 Fe(III)-[cytochrome b5] + 2 H2O. It catalyses the reaction a (7Z,10Z,13Z,16Z)-docosatetraenoyl-containing glycerolipid + 2 Fe(II)-[cytochrome b5] + O2 + 2 H(+) = a (4Z,7Z,10Z,13Z,16Z)-docosapentaenoyl-containing glycerolipid + 2 Fe(III)-[cytochrome b5] + 2 H2O. In terms of biological role, fatty acid desaturase that introduces a cis double bond at the 4-position in 22-carbon polyunsaturated fatty acids that contain a Delta(7) double bond, resulting in the production of delta-4 desaturated fatty acid docosahexanoic acid (DHA). Mediates desaturation of 22:5n-3 and 22:4n-6 into 22:6n-3 and 22:5n-6 respectively. The protein is Acyl-lipid (7-3)-desaturase of Diacronema lutheri (Unicellular marine alga).